The following is a 456-amino-acid chain: Bifunctional protein GlmU (456 aa).

The pyrophosphorylase stretch occupies residues 1-228; it reads MKLKAIILAA…YEDIMAVNSR (228 aa). UDP-N-acetyl-alpha-D-glucosamine is bound by residues 8 to 11, Lys-22, Gln-72, 77 to 78, 99 to 101, Gly-138, Glu-153, Asn-168, and Asn-226; these read LAAG, GT, and YGD. Asp-101 serves as a coordination point for Mg(2+). Asn-226 contributes to the Mg(2+) binding site. Residues 229–249 are linker; it reads EQLAEVEEVMQRRIVKKHMEA. The N-acetyltransferase stretch occupies residues 250–456; that stretch reads GVTFIDPQST…WVARKGVGKK (207 aa). 2 residues coordinate UDP-N-acetyl-alpha-D-glucosamine: Arg-331 and Lys-349. Residue His-361 is the Proton acceptor of the active site. Tyr-364 and Asn-375 together coordinate UDP-N-acetyl-alpha-D-glucosamine. Acetyl-CoA is bound by residues 384–385, Ser-403, Ser-421, and Arg-438; that span reads NY.

It in the N-terminal section; belongs to the N-acetylglucosamine-1-phosphate uridyltransferase family. In the C-terminal section; belongs to the transferase hexapeptide repeat family. Homotrimer. Mg(2+) is required as a cofactor.

It localises to the cytoplasm. It catalyses the reaction alpha-D-glucosamine 1-phosphate + acetyl-CoA = N-acetyl-alpha-D-glucosamine 1-phosphate + CoA + H(+). It carries out the reaction N-acetyl-alpha-D-glucosamine 1-phosphate + UTP + H(+) = UDP-N-acetyl-alpha-D-glucosamine + diphosphate. It functions in the pathway nucleotide-sugar biosynthesis; UDP-N-acetyl-alpha-D-glucosamine biosynthesis; N-acetyl-alpha-D-glucosamine 1-phosphate from alpha-D-glucosamine 6-phosphate (route II): step 2/2. The protein operates within nucleotide-sugar biosynthesis; UDP-N-acetyl-alpha-D-glucosamine biosynthesis; UDP-N-acetyl-alpha-D-glucosamine from N-acetyl-alpha-D-glucosamine 1-phosphate: step 1/1. It participates in bacterial outer membrane biogenesis; LPS lipid A biosynthesis. Functionally, catalyzes the last two sequential reactions in the de novo biosynthetic pathway for UDP-N-acetylglucosamine (UDP-GlcNAc). The C-terminal domain catalyzes the transfer of acetyl group from acetyl coenzyme A to glucosamine-1-phosphate (GlcN-1-P) to produce N-acetylglucosamine-1-phosphate (GlcNAc-1-P), which is converted into UDP-GlcNAc by the transfer of uridine 5-monophosphate (from uridine 5-triphosphate), a reaction catalyzed by the N-terminal domain. This Alkaliphilus metalliredigens (strain QYMF) protein is Bifunctional protein GlmU.